The following is a 396-amino-acid chain: 1-deoxy-D-xylulose 5-phosphate reductoisomerase (396 aa).

6 residues coordinate NADPH: T15, G16, S17, I18, G41, and N130. 1-deoxy-D-xylulose 5-phosphate is bound at residue K131. Residue E132 coordinates NADPH. D155 contributes to the Mn(2+) binding site. Residues S156, E157, S181, and H204 each contribute to the 1-deoxy-D-xylulose 5-phosphate site. E157 provides a ligand contact to Mn(2+). G210 is a binding site for NADPH. 1-deoxy-D-xylulose 5-phosphate contacts are provided by S217, N222, K223, and E226. Residue E226 coordinates Mn(2+).

It belongs to the DXR family. Mg(2+) serves as cofactor. It depends on Mn(2+) as a cofactor.

It carries out the reaction 2-C-methyl-D-erythritol 4-phosphate + NADP(+) = 1-deoxy-D-xylulose 5-phosphate + NADPH + H(+). It functions in the pathway isoprenoid biosynthesis; isopentenyl diphosphate biosynthesis via DXP pathway; isopentenyl diphosphate from 1-deoxy-D-xylulose 5-phosphate: step 1/6. Functionally, catalyzes the NADPH-dependent rearrangement and reduction of 1-deoxy-D-xylulose-5-phosphate (DXP) to 2-C-methyl-D-erythritol 4-phosphate (MEP). The chain is 1-deoxy-D-xylulose 5-phosphate reductoisomerase from Bifidobacterium longum (strain DJO10A).